A 117-amino-acid polypeptide reads, in one-letter code: Cell division protein FtsL (117 aa).

Over 1 to 35 the chain is Cytoplasmic; the sequence is MSNLAYQPEKQQRHAISPEKKVIVKKRASITLGEK. A helical transmembrane segment spans residues 36–56; the sequence is VLLVLFAAAVLSVSLLIVSKA. The Extracellular portion of the chain corresponds to 57–117; it reads YAAYQTNIEV…KDKKVKNIQE (61 aa).

The protein belongs to the FtsL family. Monomer. Interacts with DivIB and DivIC. Interaction with DivIC stabilizes FtsL against RasP cleavage. In terms of processing, cleaved by RasP. Cleavage is important for turnover and function of FtsL.

Its subcellular location is the cell membrane. Functionally, essential cell division protein that may play a structural role. Probably involved in the regulation of the timing of cell division. Also required for sporulation. The chain is Cell division protein FtsL from Bacillus subtilis (strain 168).